A 147-amino-acid polypeptide reads, in one-letter code: Putative pre-16S rRNA nuclease (147 aa).

This sequence belongs to the YqgF nuclease family.

It is found in the cytoplasm. In terms of biological role, could be a nuclease involved in processing of the 5'-end of pre-16S rRNA. The chain is Putative pre-16S rRNA nuclease from Ureaplasma parvum serovar 3 (strain ATCC 27815 / 27 / NCTC 11736).